Reading from the N-terminus, the 168-residue chain is Phosphopantetheine adenylyltransferase (168 aa).

Position 13 (Thr13) interacts with substrate. ATP-binding positions include 13-14 and His21; that span reads TF. Substrate-binding residues include Lys45, Leu78, and Arg92. ATP is bound by residues 93 to 95, Glu103, and 128 to 134; these read GLR and TQFISSS.

It belongs to the bacterial CoaD family. Homohexamer. Requires Mg(2+) as cofactor.

The protein resides in the cytoplasm. It catalyses the reaction (R)-4'-phosphopantetheine + ATP + H(+) = 3'-dephospho-CoA + diphosphate. It functions in the pathway cofactor biosynthesis; coenzyme A biosynthesis; CoA from (R)-pantothenate: step 4/5. Reversibly transfers an adenylyl group from ATP to 4'-phosphopantetheine, yielding dephospho-CoA (dPCoA) and pyrophosphate. The sequence is that of Phosphopantetheine adenylyltransferase from Wolbachia pipientis subsp. Culex pipiens (strain wPip).